We begin with the raw amino-acid sequence, 265 residues long: MADTTTAAQADQKPTRAFGAGRPQRGAGGAPQRGGPRPQRGGQGETKSWTPVTKLGRLVALGLVENIHEIYLFSLPIKEYQIIDKFLNLKDEVMKIVPVQKQTRAGQRTRFKAFVVVGDHNGHVGLGVKCAKEVATAISGAIVAAKLSVIPVRRGYWGNKLGAPHTVPTKVTGKCGSVAVRLVPAPRGTGIVAARVPKKLLQYAGVDDVYTSSRGKTRTMGNFVMATFFAITKTFAYLTPDLWREVKLIKTPYQEHSAKLSEKQQ.

Low complexity predominate over residues 1 to 25 (MADTTTAAQADQKPTRAFGAGRPQR). The segment at 1–49 (MADTTTAAQADQKPTRAFGAGRPQRGAGGAPQRGGPRPQRGGQGETKSW) is disordered. Alanine 2 bears the N-acetylalanine mark. The 64-residue stretch at 89–152 (LKDEVMKIVP…VAAKLSVIPV (64 aa)) folds into the S5 DRBM domain.

It belongs to the universal ribosomal protein uS5 family.

Functionally, component of the ribosome, a large ribonucleoprotein complex responsible for the synthesis of proteins in the cell. The small ribosomal subunit (SSU) binds messenger RNAs (mRNAs) and translates the encoded message by selecting cognate aminoacyl-transfer RNA (tRNA) molecules. The large subunit (LSU) contains the ribosomal catalytic site termed the peptidyl transferase center (PTC), which catalyzes the formation of peptide bonds, thereby polymerizing the amino acids delivered by tRNAs into a polypeptide chain. The nascent polypeptides leave the ribosome through a tunnel in the LSU and interact with protein factors that function in enzymatic processing, targeting, and the membrane insertion of nascent chains at the exit of the ribosomal tunnel. Plays a role in the assembly and function of the 40S ribosomal subunit. Mutations in this protein affects the control of translational fidelity. Involved in nucleolar processing of pre-18S ribosomal RNA and ribosome assembly. This is Small ribosomal subunit protein uS5 (rps2) from Dictyostelium discoideum (Social amoeba).